Consider the following 145-residue polypeptide: FAD synthase (145 aa).

ATP contacts are provided by residues 9 to 10 (TF), 14 to 17 (HPGH), aspartate 94, and tyrosine 122.

Belongs to the archaeal FAD synthase family. In terms of assembly, homodimer. Requires a divalent metal cation as cofactor.

It carries out the reaction FMN + ATP + H(+) = FAD + diphosphate. It participates in cofactor biosynthesis; FAD biosynthesis; FAD from FMN: step 1/1. Functionally, catalyzes the transfer of the AMP portion of ATP to flavin mononucleotide (FMN) to produce flavin adenine dinucleotide (FAD) coenzyme. This chain is FAD synthase, found in Methanocaldococcus infernus (strain DSM 11812 / JCM 15783 / ME).